Reading from the N-terminus, the 647-residue chain is Protein FAM161A (647 aa).

Disordered stretches follow at residues 32-55 (RELG…TSME) and 143-175 (PAQH…GDSE). Residues 152–161 (SRSVSPSLAE) show a composition bias toward polar residues. Coiled coils occupy residues 243 to 268 (IKSK…ECQK) and 518 to 544 (AIRK…VLNK). 2 disordered regions span residues 504-524 (QTPR…KREK) and 588-647 (DEHV…IEEI). Basic and acidic residues-rich tracts occupy residues 510 to 524 (ESSK…KREK) and 588 to 600 (DEHV…KKIP). The segment covering 613–638 (DLLDDEEDDKYDCESEEAEEEDAYST) has biased composition (acidic residues).

Belongs to the FAM161 family.

It localises to the cytoplasm. The protein resides in the cytoskeleton. It is found in the cilium basal body. Its subcellular location is the cell projection. The protein localises to the cilium. It localises to the microtubule organizing center. The protein resides in the centrosome. It is found in the centriole. Its function is as follows. Involved in ciliogenesis. This chain is Protein FAM161A (fam161a), found in Xenopus laevis (African clawed frog).